The sequence spans 652 residues: MRLAASIAVALPVIGAASAQGFPPPVTGVTVVKSKYDENVKITYKENDICETTEGVRSFTGHVHLPPDNDYFGVYQNYSINTFFWFFEAREDPKNAPLSIWLNGGPGSSSMIGLFQENGPCWINDDSKSTTNNSFSWNNRVNMLYIDQPNQVGFSYDELTNITYSTINDTISVADFSSGVPAQNLSTLVGTGSSQKPWATANNTVNAARSIWHFAQVWFQEFPEHKPNNNKISIWTESYGGRYGPSFASYFQEQNEKIKNHTITKEGEMHILNLDTLGVINGCIDLMFQAESYAEFPYNNTYGITAYTKEKRDAIIRDIHRPDGCFDKLAKCREAAKEGDPHFYSNNATVNAICAEANSDCDKYLMEPFQEANLGYYDIAHPLQDPFPPPFFKGFLSQSSVLSDMGSPVNFSHYSQAVGKSFHGVGDYARPDVRGFTGDIAYLLESGVKVALVYGDRDYICNWLGGEQVSLGLNYTGTEAFRKAGYADVKVNSSYVGGLVRQHGNFSFTRVFEAGHEVPGYQPETSLKIFERIMFNKDIATGELDIAQKQDYGTTGTESTFQVKNEIPPSPEPTCYLLSADGTCTPEQLNAIENGTAVVENYIIKSPAASKGNPPPTTTSSPTASPTAGSAMLKAPVAMLAISALTVLAFYL.

The first 19 residues, 1–19 (MRLAASIAVALPVIGAASA), serve as a signal peptide directing secretion. The cysteines at positions 50 and 121 are disulfide-linked. Asn-77, Asn-132, Asn-161, Asn-168, Asn-184, and Asn-202 each carry an N-linked (GlcNAc...) asparagine glycan. Ser-238 is a catalytic residue. 4 N-linked (GlcNAc...) asparagine glycosylation sites follow: Asn-260, Asn-299, Asn-347, and Asn-410. 2 cysteine pairs are disulfide-bonded: Cys-325-Cys-361 and Cys-332-Cys-354. Asp-458 is an active-site residue. Substrate is bound at residue Cys-461. N-linked (GlcNAc...) asparagine glycosylation is found at Asn-474, Asn-492, and Asn-505. The active site involves His-516. A substrate-binding site is contributed by Glu-517. Residue Asn-594 is glycosylated (N-linked (GlcNAc...) asparagine). Residues 608-628 (AASKGNPPPTTTSSPTASPTA) form a disordered region. Residues 618-628 (TTSSPTASPTA) show a composition bias toward low complexity. Residue Gly-629 is the site of GPI-anchor amidated glycine attachment. Residues 630–652 (SAMLKAPVAMLAISALTVLAFYL) constitute a propeptide, removed in mature form.

It belongs to the peptidase S10 family.

The protein resides in the cell membrane. It carries out the reaction Preferential release of a C-terminal arginine or lysine residue.. Functionally, extracellular serine carboxypeptidase that contributes to pathogenicity. This chain is Carboxypeptidase S1 homolog A (SCPA), found in Trichophyton verrucosum (strain HKI 0517).